The following is a 219-amino-acid chain: GTP cyclohydrolase-2 (219 aa).

51–55 (RIHSE) provides a ligand contact to GTP. Zn(2+) contacts are provided by cysteine 56, cysteine 67, and cysteine 69. Residues glutamine 72, 94-96 (EGR), and threonine 116 each bind GTP. Aspartate 128 (proton acceptor) is an active-site residue. Arginine 130 serves as the catalytic Nucleophile. GTP is bound by residues threonine 151 and lysine 156.

The protein belongs to the GTP cyclohydrolase II family. The cofactor is Zn(2+).

It carries out the reaction GTP + 4 H2O = 2,5-diamino-6-hydroxy-4-(5-phosphoribosylamino)-pyrimidine + formate + 2 phosphate + 3 H(+). Its pathway is cofactor biosynthesis; riboflavin biosynthesis; 5-amino-6-(D-ribitylamino)uracil from GTP: step 1/4. Functionally, catalyzes the conversion of GTP to 2,5-diamino-6-ribosylamino-4(3H)-pyrimidinone 5'-phosphate (DARP), formate and pyrophosphate. The sequence is that of GTP cyclohydrolase-2 from Pasteurella multocida (strain Pm70).